A 350-amino-acid polypeptide reads, in one-letter code: S-adenosylmethionine:tRNA ribosyltransferase-isomerase (350 aa).

This sequence belongs to the QueA family. As to quaternary structure, monomer.

The protein localises to the cytoplasm. The catalysed reaction is 7-aminomethyl-7-carbaguanosine(34) in tRNA + S-adenosyl-L-methionine = epoxyqueuosine(34) in tRNA + adenine + L-methionine + 2 H(+). Its pathway is tRNA modification; tRNA-queuosine biosynthesis. Functionally, transfers and isomerizes the ribose moiety from AdoMet to the 7-aminomethyl group of 7-deazaguanine (preQ1-tRNA) to give epoxyqueuosine (oQ-tRNA). The protein is S-adenosylmethionine:tRNA ribosyltransferase-isomerase of Bacillus cereus (strain ZK / E33L).